The sequence spans 419 residues: MAGDSRNAMNQDMEIGVTSQDHKKIPKQARDYIPIATDRTRLLTEGKKPRQRYMEKTGKCNVHHGNVQETYRYLSDLFTTLVDLKWRFNLLVFTMVYTITWLFFGFIWWLIAYVRGDLDHVGDQEWIPCVENLSGFVSAFLFSIETETTIGYGFRVITEKCPEGIILLLVQAILGSIVNAFMVGCMFVKISQPKKRAETLMFSNNAVISMRDEKLCLMFRVGDLRNSHIVEASIRAKLIKSRQTKEGEFIPLNQTDINVGFDTGDDRLFLVSPLIISHEINEKSPFWEMSRAQLEQEEFEVVVILEGMVEATGMTCQARSSYMDTEVLWGHRFTPVLTLEKGFYEVDYNTFHDTYETNTPSCCAKELAEMKRSGRLLQYLPSPPLLGGCAEAGNEAEAEKDEEGEPNGLSVSQATRGSM.

Over 1 to 86 (MAGDSRNAMN…LFTTLVDLKW (86 aa)) the chain is Cytoplasmic. Ser5 bears the Phosphoserine mark. A helical membrane pass occupies residues 87–111 (RFNLLVFTMVYTITWLFFGFIWWLI). Residues 112–135 (AYVRGDLDHVGDQEWIPCVENLSG) are Extracellular-facing. The segment at residues 136-147 (FVSAFLFSIETE) is an intramembrane region (helical; Pore-forming). Positions 148-154 (TTIGYGF) form an intramembrane region, pore-forming. Positions 149–154 (TIGYGF) match the Selectivity filter motif. The Extracellular segment spans residues 155-163 (RVITEKCPE). The chain crosses the membrane as a helical span at residues 164-185 (GIILLLVQAILGSIVNAFMVGC). Over 186-419 (MFVKISQPKK…SVSQATRGSM (234 aa)) the chain is Cytoplasmic. Residues 388–419 (GCAEAGNEAEAEKDEEGEPNGLSVSQATRGSM) form a disordered region. Residues 394 to 405 (NEAEAEKDEEGE) show a composition bias toward acidic residues. A compositionally biased stretch (polar residues) spans 409–419 (LSVSQATRGSM).

The protein belongs to the inward rectifier-type potassium channel (TC 1.A.2.1) family. KCNJ5 subfamily. In terms of assembly, associates with KCNJ3/GIRK1 to form a G-protein-activated heteromultimer pore-forming unit. Associates with KCNJ6/GRIK2 to form a G-protein-activated heteromultimer pore-forming unit. As to expression, expressed in the heart.

Its subcellular location is the membrane. It catalyses the reaction K(+)(in) = K(+)(out). With respect to regulation, heteromultimer composed of KCNJ3/GIRK1 and KCNJ5/GIRK4 is activated by phosphatidylinositol 4,5 biphosphate (PtdIns(4,5)P2). Its function is as follows. Inward rectifier potassium channels are characterized by a greater tendency to allow potassium to flow into the cell rather than out of it. Their voltage dependence is regulated by the concentration of extracellular potassium; as external potassium is raised, the voltage range of the channel opening shifts to more positive voltages. The inward rectification is mainly due to the blockage of outward current by internal magnesium. Can be blocked by external barium. This potassium channel is controlled by G proteins. Forms a functional channel in association with KCNJ3/GIRK1. The polypeptide is G protein-activated inward rectifier potassium channel 4 (Kcnj5) (Mus musculus (Mouse)).